The sequence spans 699 residues: 4-alpha-glucanotransferase (699 aa).

It belongs to the disproportionating enzyme family.

The protein localises to the cytoplasm. It catalyses the reaction Transfers a segment of a (1-&gt;4)-alpha-D-glucan to a new position in an acceptor, which may be glucose or a (1-&gt;4)-alpha-D-glucan.. This chain is 4-alpha-glucanotransferase (malQ), found in Haemophilus influenzae (strain ATCC 51907 / DSM 11121 / KW20 / Rd).